The primary structure comprises 245 residues: Polyhedrin (245 aa).

The protein belongs to the polyhedrin family.

Major component of the virus occlusion bodies, which are large proteinaceous structures (polyhedra), that protect the virus from the outside environment for extended periods until they are ingested by insect larvae. This Lepidoptera (butterflies and moths) protein is Polyhedrin.